Consider the following 355-residue polypeptide: Peptide chain release factor 1 (355 aa).

Gln233 carries the post-translational modification N5-methylglutamine.

It belongs to the prokaryotic/mitochondrial release factor family. Post-translationally, methylated by PrmC. Methylation increases the termination efficiency of RF1.

It is found in the cytoplasm. Peptide chain release factor 1 directs the termination of translation in response to the peptide chain termination codons UAG and UAA. In Desulforudis audaxviator (strain MP104C), this protein is Peptide chain release factor 1.